A 706-amino-acid polypeptide reads, in one-letter code: Glycine--tRNA ligase beta subunit (706 aa).

It belongs to the class-II aminoacyl-tRNA synthetase family. As to quaternary structure, tetramer of two alpha and two beta subunits.

The protein resides in the cytoplasm. The enzyme catalyses tRNA(Gly) + glycine + ATP = glycyl-tRNA(Gly) + AMP + diphosphate. This chain is Glycine--tRNA ligase beta subunit, found in Hyphomonas neptunium (strain ATCC 15444).